Reading from the N-terminus, the 199-residue chain is Putative 3-methyladenine DNA glycosylase (199 aa).

This sequence belongs to the DNA glycosylase MPG family.

The protein is Putative 3-methyladenine DNA glycosylase of Rhizobium etli (strain ATCC 51251 / DSM 11541 / JCM 21823 / NBRC 15573 / CFN 42).